The sequence spans 451 residues: Vitamin D3 receptor (451 aa).

A DNA-binding region (nuclear receptor) is located at residues 44-112 (PRICGVCGDR…RLKRCVDIGM (69 aa)). Zn(2+) contacts are provided by cysteine 47, cysteine 50, cysteine 64, cysteine 67, cysteine 83, cysteine 89, cysteine 99, and cysteine 102. 2 consecutive NR C4-type zinc fingers follow at residues 47 to 67 (CGVCGDRATGFHFNAMTCEGC) and 83 to 107 (CPFNGDCKITKDNRRHCQACRLKRC). Hinge stretches follow at residues 113–149 (MKEFILTDEEVQRKREMILKRKEEEALKESLKPKLSE) and 120–149 (DEEVQRKREMILKRKEEEALKESLKPKLSE). Residues 150–447 (EQQKVIDTLL…LTPLVLEVFG (298 aa)) form the NR LBD domain. Serine 261 is a binding site for calcitriol. The segment at 270 to 288 (KMIPGFRDLTAEDQIALLK) is interaction with coactivator LXXLL motif. Positions 298, 302, 329, and 421 each coordinate calcitriol. The 9aaTAD signature appears at 440–448 (PLVLEVFGN).

It belongs to the nuclear hormone receptor family. NR1 subfamily. Homodimer in the absence of bound vitamin D3. Heterodimer with RXRA after vitamin D3 binding. In terms of tissue distribution, expressed in kidney and intestine.

It is found in the nucleus. Its subcellular location is the cytoplasm. Functionally, nuclear receptor for calcitriol, the active form of vitamin D3 which mediates the action of this vitamin on cells. Enters the nucleus upon vitamin D3 binding where it forms heterodimers with the retinoid X receptor/RXR. The VDR-RXR heterodimers bind to specific response elements on DNA and activate the transcription of vitamin D3-responsive target genes. Plays a central role in calcium homeostasis. Also functions as a receptor for the secondary bile acid lithocholic acid (LCA) and its metabolites. This is Vitamin D3 receptor (VDR) from Gallus gallus (Chicken).